Here is a 219-residue protein sequence, read N- to C-terminus: tRNA (guanine-N(7)-)-methyltransferase (219 aa).

S-adenosyl-L-methionine contacts are provided by glutamate 51, glutamate 76, aspartate 103, and aspartate 125. Aspartate 125 is a catalytic residue. Substrate is bound by residues lysine 129, aspartate 161, and 199-202 (TRYE).

This sequence belongs to the class I-like SAM-binding methyltransferase superfamily. TrmB family.

It carries out the reaction guanosine(46) in tRNA + S-adenosyl-L-methionine = N(7)-methylguanosine(46) in tRNA + S-adenosyl-L-homocysteine. The protein operates within tRNA modification; N(7)-methylguanine-tRNA biosynthesis. Catalyzes the formation of N(7)-methylguanine at position 46 (m7G46) in tRNA. The sequence is that of tRNA (guanine-N(7)-)-methyltransferase from Hyphomonas neptunium (strain ATCC 15444).